We begin with the raw amino-acid sequence, 363 residues long: Cytochrome c oxidase subunit 2 (363 aa).

A disordered region spans residues 1-23 (MTPRGPGRLQRLSQCRPQRGSGG). The signal sequence occupies residues 1-41 (MTPRGPGRLQRLSQCRPQRGSGGPARGLRQLALAAMLGALA). The next 2 helical transmembrane spans lie at 71–91 (LWIG…GLIF) and 118–138 (LVLT…TVVV). Cu cation is bound by residues His254, Cys295, Cys299, and His303.

The protein belongs to the cytochrome c oxidase subunit 2 family. The cofactor is Cu cation. Requires heme as cofactor.

Its subcellular location is the cell membrane. It catalyses the reaction 4 Fe(II)-[cytochrome c] + O2 + 8 H(+)(in) = 4 Fe(III)-[cytochrome c] + 2 H2O + 4 H(+)(out). Functionally, subunits I and II form the functional core of the enzyme complex. Electrons originating in cytochrome c are transferred via heme a and Cu(A) to the binuclear center formed by heme a3 and Cu(B). The polypeptide is Cytochrome c oxidase subunit 2 (ctaC) (Mycobacterium bovis (strain ATCC BAA-935 / AF2122/97)).